The following is a 409-amino-acid chain: Arginine deiminase (409 aa).

Cys397 (amidino-cysteine intermediate) is an active-site residue.

This sequence belongs to the arginine deiminase family.

Its subcellular location is the cytoplasm. The enzyme catalyses L-arginine + H2O = L-citrulline + NH4(+). The protein operates within amino-acid degradation; L-arginine degradation via ADI pathway; carbamoyl phosphate from L-arginine: step 1/2. This is Arginine deiminase (arcA) from Metamycoplasma hominis (Mycoplasma hominis).